A 281-amino-acid polypeptide reads, in one-letter code: Histidine biosynthesis bifunctional protein hisIE, chloroplastic (281 aa).

Residues 1–50 constitute a chloroplast transit peptide; sequence MAVSYNALAQSLARSSCFIPKPYSFRDTKLRSRSNVVFACNDNKNIALQA. The phosphoribosyl-AMP cyclohydrolase stretch occupies residues 51 to 178; that stretch reads KVDNLLDRIK…NKLALTTLYS (128 aa). Positions 179–281 are phosphoribosyl-ATP pyrophosphohydrolase; the sequence is LESIISKRKE…GIEEKQNRTK (103 aa).

This sequence in the N-terminal section; belongs to the PRA-CH family. The protein in the C-terminal section; belongs to the PRA-PH family. In terms of tissue distribution, ubiquitously expressed throughout development.

It is found in the plastid. It localises to the chloroplast. It carries out the reaction 1-(5-phospho-beta-D-ribosyl)-ATP + H2O = 1-(5-phospho-beta-D-ribosyl)-5'-AMP + diphosphate + H(+). It catalyses the reaction 1-(5-phospho-beta-D-ribosyl)-5'-AMP + H2O = 1-(5-phospho-beta-D-ribosyl)-5-[(5-phospho-beta-D-ribosylamino)methylideneamino]imidazole-4-carboxamide. Its pathway is amino-acid biosynthesis; L-histidine biosynthesis; L-histidine from 5-phospho-alpha-D-ribose 1-diphosphate: step 2/9. It functions in the pathway amino-acid biosynthesis; L-histidine biosynthesis; L-histidine from 5-phospho-alpha-D-ribose 1-diphosphate: step 3/9. This is Histidine biosynthesis bifunctional protein hisIE, chloroplastic (HISN2) from Arabidopsis thaliana (Mouse-ear cress).